Here is a 345-residue protein sequence, read N- to C-terminus: NADH-ubiquinone oxidoreductase chain 2 (345 aa).

The next 10 helical transmembrane spans lie at 1 to 21 (MNPI…ILTM), 25 to 45 (HWVS…PIIS), 59 to 79 (YFLI…TNAY), 96 to 116 (IMLS…FWLP), 123 to 143 (PMIT…ALLI), 148 to 168 (LIPP…GGLG), 191 to 211 (ITIT…YILL), 240 to 260 (TASL…LSGF), 274 to 294 (HLTP…MFYL), and 324 to 344 (SLLS…PLMI).

This sequence belongs to the complex I subunit 2 family.

It localises to the mitochondrion inner membrane. It catalyses the reaction a ubiquinone + NADH + 5 H(+)(in) = a ubiquinol + NAD(+) + 4 H(+)(out). Its function is as follows. Core subunit of the mitochondrial membrane respiratory chain NADH dehydrogenase (Complex I) that is believed to belong to the minimal assembly required for catalysis. Complex I functions in the transfer of electrons from NADH to the respiratory chain. The immediate electron acceptor for the enzyme is believed to be ubiquinone. The sequence is that of NADH-ubiquinone oxidoreductase chain 2 (MT-ND2) from Varanus timorensis (Timor monitor).